Consider the following 271-residue polypeptide: Thiosulfate sulfurtransferase (271 aa).

2 Rhodanese domains span residues 21–129 (SAPE…PLSR) and 159–270 (GAAD…TPVE). Cys-230 (cysteine persulfide intermediate) is an active-site residue. Arg-235 is a binding site for substrate.

The protein resides in the cytoplasm. It catalyses the reaction thiosulfate + hydrogen cyanide = thiocyanate + sulfite + 2 H(+). This Azotobacter vinelandii protein is Thiosulfate sulfurtransferase (rhdA).